The following is a 747-amino-acid chain: MSTTISDSIASMISRINDIVITVAPSGDSNDSHRHSQIICDGGRTIQPLDDSSETTLAYADPNNPYLSNIDGDFRPIEQLSEEAAVEQATQLREAIREHDYQYYIRASPIIADRAYDILFDRLQALEDIFNLDTEASPTRRVGGEPLDELETVEHVTSMLSIDQSTAVDSVRDFDERVRDVVGDLEYICEPKFDGLSVEVIYEDGEYIRAATRGDGNRGDDVTAQVETVGAVPLKLHGDYPSYLAVRGEVYMPKAGFREYNRERIECDEKPFANPRNAAAGTLRQLDPGVVAERPLSCFFYDILDATELPPDQWTTLNDLQSWGLRTNDRISRVDSIDDAIAYRDQLKAARAELNYEIDGTVIKVNDRGNREILGATSRSVRWAFAYKFPPRAEITHITDIVVQVGRTGRLTPVALLDPVDVGGVTVSRASLHNPEEIKRLSVNSGDEVRVRRAGDVIPEVAEVTQKRATGTFNFPNQCPICHSSVEQDGPLAFCTGGLTCDAQLVRTIVHYGSRSALDIDGLGEQRVEQLVESGVIGELADLYTLSVADLSKLDGWGTTSAENLIQAISETQTPSLTDFLVGLGIPEVGPTIARNLAGTFDNFDAIIDADEAALREIEDIGPTVSTHISEFFTNEQNRAAIDNLLSAGVTPQTQQSTATTNAPLSDLTFVFTGSLSVPRTTATTYIERHGGNATGSVSSNTDYLVIGDNPGSTKRIDAERNDVPEIDETEFTELLAEHDDTLTWPP.

NAD(+) is bound by residues 113 to 117, 161 to 162, and Glu-190; these read DRAYD and SI. The active-site N6-AMP-lysine intermediate is the Lys-192. Residues Arg-213, Glu-249, Lys-364, and Lys-388 each contribute to the NAD(+) site. 4 residues coordinate Zn(2+): Cys-479, Cys-482, Cys-495, and Cys-501. The 88-residue stretch at 660–747 folds into the BRCT domain; the sequence is TTNAPLSDLT…EHDDTLTWPP (88 aa).

It belongs to the NAD-dependent DNA ligase family. LigA subfamily. Mg(2+) is required as a cofactor. The cofactor is Mn(2+).

It carries out the reaction NAD(+) + (deoxyribonucleotide)n-3'-hydroxyl + 5'-phospho-(deoxyribonucleotide)m = (deoxyribonucleotide)n+m + AMP + beta-nicotinamide D-nucleotide.. Its function is as follows. DNA ligase that catalyzes the formation of phosphodiester linkages between 5'-phosphoryl and 3'-hydroxyl groups in double-stranded DNA using NAD as a coenzyme and as the energy source for the reaction. It is essential for DNA replication and repair of damaged DNA. In Haloquadratum walsbyi (strain DSM 16790 / HBSQ001), this protein is DNA ligase.